The primary structure comprises 311 residues: Exosome complex component Rrp4 (311 aa).

An S1 motif domain is found at 63–131; the sequence is GDVVIGEITD…EVKKVKLGLK (69 aa). In terms of domain architecture, KH spans 139–197; that stretch reads RDGILVYITPTKVPRLIGKRGSMINMVKEKTHCDIVVGQNGVVWIKGEPDMERIAEKVV. The disordered stretch occupies residues 222–311; the sequence is GVEPEIQVEE…EVKDENNSER (90 aa). Acidic residues predominate over residues 241 to 300; the sequence is PESEDFEEASDYSEDVEVSPESEDIEEVSDESEDLEVESEDVEEGTDTPAAEEDDGEAGD. Positions 301-311 are enriched in basic and acidic residues; it reads AEVKDENNSER.

This sequence belongs to the RRP4 family. As to quaternary structure, component of the archaeal exosome complex. Forms a trimer of Rrp4 and/or Csl4 subunits. The trimer associates with a hexameric ring-like arrangement composed of 3 Rrp41-Rrp42 heterodimers.

The protein localises to the cytoplasm. Non-catalytic component of the exosome, which is a complex involved in RNA degradation. Increases the RNA binding and the efficiency of RNA degradation. Confers strong poly(A) specificity to the exosome. The chain is Exosome complex component Rrp4 from Methanothermobacter thermautotrophicus (strain ATCC 29096 / DSM 1053 / JCM 10044 / NBRC 100330 / Delta H) (Methanobacterium thermoautotrophicum).